The sequence spans 320 residues: Pyrroline-5-carboxylate reductase 1, mitochondrial (320 aa).

Ser2 bears the N-acetylserine mark. Residues 6 to 11 (IGAGQL) and Ser34 contribute to the NADP(+) site. Residues Ala8, Gln10, Leu11, Ser34, Asp36, Asn56, Val70, Lys71, and Ala97 each contribute to the NADPH site. Residues Asn56, 69–72 (AVKP), and 95–97 (CAA) contribute to the NADP(+) site. Glu164 is a binding site for L-proline. Asn230 contributes to the NADPH binding site. The L-proline site is built by Ala237 and Thr238. Ser278 carries the phosphoserine modification. Positions 292-320 (LDSPPGTSLAPSGHSKLLPRSMAPAGKQD) are disordered.

It belongs to the pyrroline-5-carboxylate reductase family. Homodecamer; composed of 5 homodimers. Interacts with LTO1.

It localises to the mitochondrion. The catalysed reaction is L-proline + NADP(+) = (S)-1-pyrroline-5-carboxylate + NADPH + 2 H(+). It carries out the reaction L-proline + NAD(+) = (S)-1-pyrroline-5-carboxylate + NADH + 2 H(+). It participates in amino-acid biosynthesis; L-proline biosynthesis; L-proline from L-glutamate 5-semialdehyde: step 1/1. In terms of biological role, oxidoreductase that catalyzes the last step in proline biosynthesis, which corresponds to the reduction of pyrroline-5-carboxylate to L-proline using NAD(P)H. At physiologic concentrations, has higher specific activity in the presence of NADH. Involved in the cellular response to oxidative stress. The sequence is that of Pyrroline-5-carboxylate reductase 1, mitochondrial (PYCR1) from Bos taurus (Bovine).